Here is a 142-residue protein sequence, read N- to C-terminus: Large ribosomal subunit protein uL13 (142 aa).

The protein belongs to the universal ribosomal protein uL13 family. In terms of assembly, part of the 50S ribosomal subunit.

Its function is as follows. This protein is one of the early assembly proteins of the 50S ribosomal subunit, although it is not seen to bind rRNA by itself. It is important during the early stages of 50S assembly. This is Large ribosomal subunit protein uL13 from Pectobacterium atrosepticum (strain SCRI 1043 / ATCC BAA-672) (Erwinia carotovora subsp. atroseptica).